We begin with the raw amino-acid sequence, 150 residues long: Large ribosomal subunit protein bL9 (150 aa).

It belongs to the bacterial ribosomal protein bL9 family.

Binds to the 23S rRNA. The sequence is that of Large ribosomal subunit protein bL9 from Herminiimonas arsenicoxydans.